Here is a 138-residue protein sequence, read N- to C-terminus: Glutaredoxin-C7 (138 aa).

The interval 17-40 is disordered; sequence SSTRGGGGGGMLGLTLFDPPGGEQ. The Glutaredoxin domain occupies 42-137; the sequence is AERIGRLVRE…PRLREVGALC (96 aa). C62 and C65 are oxidised to a cystine.

Belongs to the glutaredoxin family. CC-type subfamily.

The protein localises to the cytoplasm. Its function is as follows. Has a glutathione-disulfide oxidoreductase activity in the presence of NADPH and glutathione reductase. Reduces low molecular weight disulfides and proteins. This is Glutaredoxin-C7 (GRXC7) from Oryza sativa subsp. japonica (Rice).